A 339-amino-acid polypeptide reads, in one-letter code: NmrA-like family domain-containing oxidoreductase cpsB (339 aa).

Lys142 contacts NADP(+).

Belongs to the NmrA-type oxidoreductase family.

It catalyses the reaction didehydrocampesine A + 2 AH2 = campesine A + 2 A. It participates in alkaloid biosynthesis. Functionally, oxidoreductase; part of the gene cluster that mediates the biosynthesis of campesine G, a dimeric indole piperazine alkaloid that shows good insecticidal activity Galleria mellonella. Within the pathway, cpsB reduces the unstable (S,S)-trypyl-valyl dihydropiperazine (didehydrocampesine A) intermediate to (S, S)-trypyl-valyl-piperazine (campesine A) using two equivalents of NAD(P)H. The non-canonical non-ribosomal peptide synthetase cpsA catalyzes the first steps of the pathway by producing L-tryptophanal and L-valinal from their respective amino-acids. These products condensate spontaneously to form trypyl-valyl pyrazine also known as didehydrocampesine A. The NmrA-like family domain-containing oxidoreductase cpsB is the next enzyme in cps pathway and reduces the unstable didehydrocampesine A to campesine A. The methyltransferase cpsF and the acetyltransferase cpsE both recognize N13 of piperazine ring to carry out methylation and acetylation of campesine A to produce campesine C and B, respectively. The cytochrome P450 monooxygenase cpsD then acts as a dimerase that catalyzes oxidative heterocoupling between campesine B and C to produce heterodimers with unexpected 6/5/6/6/6/6/5/6 eight-ring scaffold called campesine D. Finally,the cytochrome P450 monooxygenase cpsC is a regioselective dehydrogenase that catalyzes dehydrogenation reaction towards C2-N1 to produce campesine G. The chain is NmrA-like family domain-containing oxidoreductase cpsB from Aspergillus campestris (strain IBT 28561).